Here is a 197-residue protein sequence, read N- to C-terminus: Peptide deformylase (197 aa).

Residues cysteine 106 and histidine 148 each contribute to the Fe cation site. The active site involves glutamate 149. Fe cation is bound at residue histidine 152.

It belongs to the polypeptide deformylase family. Requires Fe(2+) as cofactor.

The enzyme catalyses N-terminal N-formyl-L-methionyl-[peptide] + H2O = N-terminal L-methionyl-[peptide] + formate. Its function is as follows. Removes the formyl group from the N-terminal Met of newly synthesized proteins. Requires at least a dipeptide for an efficient rate of reaction. N-terminal L-methionine is a prerequisite for activity but the enzyme has broad specificity at other positions. This chain is Peptide deformylase, found in Mycobacterium tuberculosis (strain ATCC 25177 / H37Ra).